The primary structure comprises 596 residues: MQNPVASLLFILAMLTGPCPAADYPERTERTQSAGNHVWHIDPDKGNDGNPGTAPSTAWKSMAPANRLIMARGDTLVIHPGEHAVSLALMGEGSKQAPVTIRFMPGRHIFKHGALMTGKPQISNTNDAPNEPKAMAIRLMEAKNIRLEGKPGATDILLEGKAIFVCMEHAENVSLNGLGFDYLHPTMGEFLVTEVEGDTMKATIPDGTLYTVKDGNLTWHGPGWEFRMGGYSKVFDSASGTFQGRFDPGKTVIRELSPGKISITFKEGSPTMKPGQSYQNRNTRRDCCGFFQYRSKNILWNNCHIYYMHGMGVVSQFCENIMFSHLKIAPRPRSLRTNSSWADNLHFSGCRGKIIVKDCVLGASHDDAVNVHGTHLRIIDRPAPNKITVRFMHPQTFGFDAFAAGDRIDYVSCNTLVPYASNTVSGVKQLNEKEIELTLQHPNPGNIQPDDVVENVTWTPSVHISNTVCRHIPTRGFLLTTRKPVLVERCRFEKTGMPAILVEDDASGWYESGVVRNMTISRNTFIQCGEAVIQIVPHAPRPEGDVHRNITITGNTFDLKNGTAIRIRHTGDVKAEKNTFTKDGKKIPEEKAVDIR.

The first 21 residues, 1-21 (MQNPVASLLFILAMLTGPCPA), serve as a signal peptide directing secretion. Residues 23–57 (DYPERTERTQSAGNHVWHIDPDKGNDGNPGTAPST) are disordered. PbH1 repeat units follow at residues 351 to 373 (RGKI…NVHG), 482 to 504 (RKPV…LVED), 515 to 537 (VRNM…QIVP), and 547 to 569 (HRNI…RIRH).

This sequence belongs to the glycosyl hydrolase 110 family. A subfamily.

The enzyme catalyses Hydrolysis of terminal, non-reducing branched (1-&gt;3)-alpha-D-galactosidic residues, producing free D-galactose.. It carries out the reaction Hydrolysis of terminal, non-reducing alpha-D-galactose residues in alpha-D-galactosides, including galactose oligosaccharides, galactomannans and galactolipids.. In terms of biological role, alpha-galactosidase that specifically removes branched alpha-1,3-linked galactose residues present in blood group B antigens. Has no activity toward linear alpha-1,3-linked galactose residues. This chain is Alpha-1,3-galactosidase A (glaA), found in Akkermansia muciniphila (strain ATCC BAA-835 / DSM 22959 / JCM 33894 / BCRC 81048 / CCUG 64013 / CIP 107961 / Muc).